The sequence spans 175 residues: Alkyl hydroperoxide reductase AhpD (175 aa).

The active-site Proton donor is Cys131. Cys131 and Cys134 are disulfide-bonded. Cys134 acts as the Cysteine sulfenic acid (-SOH) intermediate in catalysis.

This sequence belongs to the AhpD family.

The catalysed reaction is N(6)-[(R)-dihydrolipoyl]-L-lysyl-[lipoyl-carrier protein] + a hydroperoxide = N(6)-[(R)-lipoyl]-L-lysyl-[lipoyl-carrier protein] + an alcohol + H2O. Functionally, antioxidant protein with alkyl hydroperoxidase activity. Required for the reduction of the AhpC active site cysteine residues and for the regeneration of the AhpC enzyme activity. This chain is Alkyl hydroperoxide reductase AhpD, found in Brucella canis (strain ATCC 23365 / NCTC 10854 / RM-666).